The sequence spans 308 residues: Cytochrome b (308 aa).

The next 4 helical transmembrane spans lie at 1-21, 45-66, 81-101, and 146-166; these read FGLLLGICLIVQIVTGLLLAA, WLIRNLHANGASFFFICIYLHI, WNIGVILLLTLMATAFVGYVX, and FFALHFLLPFVFAGLTLVHLT. Heme b-binding residues include H51 and H65. The heme b site is built by H150 and H164. H169 is an a ubiquinone binding site. Transmembrane regions (helical) follow at residues 194–214, 256–276, and 288–308; these read TKDVLGFVLMLIPLITLALFS, LGGVLALAASVLVLFLIPFLH, and LSQILFWTLVANLLMLTWVSN.

This sequence belongs to the cytochrome b family. In terms of assembly, the cytochrome bc1 complex contains 11 subunits: 3 respiratory subunits (MT-CYB, CYC1 and UQCRFS1), 2 core proteins (UQCRC1 and UQCRC2) and 6 low-molecular weight proteins (UQCRH/QCR6, UQCRB/QCR7, UQCRQ/QCR8, UQCR10/QCR9, UQCR11/QCR10 and a cleavage product of UQCRFS1). This cytochrome bc1 complex then forms a dimer. It depends on heme b as a cofactor.

The protein localises to the mitochondrion inner membrane. Its function is as follows. Component of the ubiquinol-cytochrome c reductase complex (complex III or cytochrome b-c1 complex) that is part of the mitochondrial respiratory chain. The b-c1 complex mediates electron transfer from ubiquinol to cytochrome c. Contributes to the generation of a proton gradient across the mitochondrial membrane that is then used for ATP synthesis. The sequence is that of Cytochrome b (MT-CYB) from Pomatostomus ruficeps (Chestnut-crowned babbler).